Here is a 731-residue protein sequence, read N- to C-terminus: 1,4-alpha-glucan branching enzyme GlgB (731 aa).

The Nucleophile role is filled by Asp-408. Glu-461 serves as the catalytic Proton donor.

It belongs to the glycosyl hydrolase 13 family. GlgB subfamily. Monomer.

It catalyses the reaction Transfers a segment of a (1-&gt;4)-alpha-D-glucan chain to a primary hydroxy group in a similar glucan chain.. Its pathway is glycan biosynthesis; glycogen biosynthesis. Functionally, catalyzes the formation of the alpha-1,6-glucosidic linkages in glycogen by scission of a 1,4-alpha-linked oligosaccharide from growing alpha-1,4-glucan chains and the subsequent attachment of the oligosaccharide to the alpha-1,6 position. This chain is 1,4-alpha-glucan branching enzyme GlgB, found in Corynebacterium glutamicum (strain ATCC 13032 / DSM 20300 / JCM 1318 / BCRC 11384 / CCUG 27702 / LMG 3730 / NBRC 12168 / NCIMB 10025 / NRRL B-2784 / 534).